Reading from the N-terminus, the 406-residue chain is Formate-dependent phosphoribosylglycinamide formyltransferase (406 aa).

N(1)-(5-phospho-beta-D-ribosyl)glycinamide is bound by residues 27 to 28 and E87; that span reads EL. ATP is bound by residues R120, K162, 167-172, 202-205, and E210; these read SSGKGQ and EGFI. Residues 125–320 form the ATP-grasp domain; sequence RLAAETLGLP…EFELHARALL (196 aa). Residues E279 and E291 each coordinate Mg(2+). N(1)-(5-phospho-beta-D-ribosyl)glycinamide-binding positions include D298, K367, and 374–375; that span reads RR.

The protein belongs to the PurK/PurT family. Homodimer.

It carries out the reaction N(1)-(5-phospho-beta-D-ribosyl)glycinamide + formate + ATP = N(2)-formyl-N(1)-(5-phospho-beta-D-ribosyl)glycinamide + ADP + phosphate + H(+). The protein operates within purine metabolism; IMP biosynthesis via de novo pathway; N(2)-formyl-N(1)-(5-phospho-D-ribosyl)glycinamide from N(1)-(5-phospho-D-ribosyl)glycinamide (formate route): step 1/1. In terms of biological role, involved in the de novo purine biosynthesis. Catalyzes the transfer of formate to 5-phospho-ribosyl-glycinamide (GAR), producing 5-phospho-ribosyl-N-formylglycinamide (FGAR). Formate is provided by PurU via hydrolysis of 10-formyl-tetrahydrofolate. This chain is Formate-dependent phosphoribosylglycinamide formyltransferase, found in Bordetella bronchiseptica (strain ATCC BAA-588 / NCTC 13252 / RB50) (Alcaligenes bronchisepticus).